The following is a 201-amino-acid chain: Peptide deformylase (201 aa).

Positions 1–21 (MANHFSQLAKKSRTNGNAEKI) are disordered. Positions 121 and 163 each coordinate Fe cation. Glu-164 is a catalytic residue. His-167 contributes to the Fe cation binding site.

This sequence belongs to the polypeptide deformylase family. The cofactor is Fe(2+).

It catalyses the reaction N-terminal N-formyl-L-methionyl-[peptide] + H2O = N-terminal L-methionyl-[peptide] + formate. In terms of biological role, removes the formyl group from the N-terminal Met of newly synthesized proteins. Requires at least a dipeptide for an efficient rate of reaction. N-terminal L-methionine is a prerequisite for activity but the enzyme has broad specificity at other positions. The polypeptide is Peptide deformylase (Prochlorococcus marinus (strain AS9601)).